Consider the following 340-residue polypeptide: Phosphoribosylformylglycinamidine cyclo-ligase (340 aa).

It belongs to the AIR synthase family.

It is found in the cytoplasm. It carries out the reaction 2-formamido-N(1)-(5-O-phospho-beta-D-ribosyl)acetamidine + ATP = 5-amino-1-(5-phospho-beta-D-ribosyl)imidazole + ADP + phosphate + H(+). The protein operates within purine metabolism; IMP biosynthesis via de novo pathway; 5-amino-1-(5-phospho-D-ribosyl)imidazole from N(2)-formyl-N(1)-(5-phospho-D-ribosyl)glycinamide: step 2/2. The protein is Phosphoribosylformylglycinamidine cyclo-ligase of Streptococcus agalactiae serotype Ia (strain ATCC 27591 / A909 / CDC SS700).